The following is a 393-amino-acid chain: Glucose-1-phosphate adenylyltransferase (393 aa).

Alpha-D-glucose 1-phosphate is bound by residues tyrosine 105, glycine 170, 185–186 (EK), and serine 196.

It belongs to the bacterial/plant glucose-1-phosphate adenylyltransferase family. As to quaternary structure, homotetramer.

It catalyses the reaction alpha-D-glucose 1-phosphate + ATP + H(+) = ADP-alpha-D-glucose + diphosphate. Its pathway is glycan biosynthesis; glycogen biosynthesis. Functionally, involved in the biosynthesis of ADP-glucose, a building block required for the elongation reactions to produce glycogen. Catalyzes the reaction between ATP and alpha-D-glucose 1-phosphate (G1P) to produce pyrophosphate and ADP-Glc. This is Glucose-1-phosphate adenylyltransferase from Clostridium perfringens (strain 13 / Type A).